Consider the following 337-residue polypeptide: Fructose-1,6-bisphosphatase class 1 (337 aa).

Mg(2+) contacts are provided by E94, D116, L118, and D119. Substrate-binding positions include 119–122 (DGSS), N210, and K276. E282 serves as a coordination point for Mg(2+).

Belongs to the FBPase class 1 family. In terms of assembly, homotetramer. Requires Mg(2+) as cofactor.

Its subcellular location is the cytoplasm. It catalyses the reaction beta-D-fructose 1,6-bisphosphate + H2O = beta-D-fructose 6-phosphate + phosphate. The protein operates within carbohydrate biosynthesis; gluconeogenesis. This chain is Fructose-1,6-bisphosphatase class 1, found in Burkholderia multivorans (strain ATCC 17616 / 249).